Here is a 169-residue protein sequence, read N- to C-terminus: Transmembrane protein B169L (169 aa).

2 consecutive transmembrane segments (helical) span residues 28–48 (NPFIVALIITAVVLVVFFAIC) and 60–80 (TAIYVYICIVALLFLHYYVLN). N88 is a glycosylation site (N-linked (GlcNAc...) asparagine; by host). The disordered stretch occupies residues 107–169 (DEIIPPISPP…EVIMPSQYNN (63 aa)). A compositionally biased stretch (low complexity) spans 144-154 (SKPASSADSKP).

The protein belongs to the asfivirus B169L family.

It localises to the host membrane. Its subcellular location is the virion. This is Transmembrane protein B169L from Ornithodoros (relapsing fever ticks).